The following is a 381-amino-acid chain: MSKGVEIFYKGQKAFLNILSLWPQIERRWRIIHQVNYVHVIVFWVLLFDLLLVLHVMANLSYMSEVVKAIFILATSAGHTTKLLSIKANNVQMEELFRRLDNEEFRPRGANEELIFAAACERSRKLRDFYGALSFAALSMILIPQFALDWSHLPLKTYNPLGENTGSPAYWLLYCYQCLALSVSCITNIGFDSLCSSLFIFLKCQLDILAVRLDKIGRLITTSGGTVEQQLKENIRYHMTIVELSKTVERLLCKPISVQIFCSVLVLTANFYAIAVLSDERLELFKYVTYQACMLIQIFILCYYAGEVTQRSLDLPHELYKTSWVDWDYRSRRIALLFMQRLHSTLRIRTLNPSLGFDLMLFSSIVNCSYSYFALLKRVNS.

Topologically, residues 1 to 37 (MSKGVEIFYKGQKAFLNILSLWPQIERRWRIIHQVNY) are cytoplasmic. A helical transmembrane segment spans residues 38–58 (VHVIVFWVLLFDLLLVLHVMA). Asparagine 59 is a glycosylation site (N-linked (GlcNAc...) asparagine). At 59–65 (NLSYMSE) the chain is on the extracellular side. A helical transmembrane segment spans residues 66–86 (VVKAIFILATSAGHTTKLLSI). Residues 87-127 (KANNVQMEELFRRLDNEEFRPRGANEELIFAAACERSRKLR) lie on the Cytoplasmic side of the membrane. Residues 128 to 148 (DFYGALSFAALSMILIPQFAL) form a helical membrane-spanning segment. The Extracellular portion of the chain corresponds to 149 to 170 (DWSHLPLKTYNPLGENTGSPAY). A helical membrane pass occupies residues 171-191 (WLLYCYQCLALSVSCITNIGF). Over 192 to 255 (DSLCSSLFIF…KTVERLLCKP (64 aa)) the chain is Cytoplasmic. The helical transmembrane segment at 256 to 276 (ISVQIFCSVLVLTANFYAIAV) threads the bilayer. Over 277–287 (LSDERLELFKY) the chain is Extracellular. Residues 288 to 308 (VTYQACMLIQIFILCYYAGEV) traverse the membrane as a helical segment. Residues 309-355 (TQRSLDLPHELYKTSWVDWDYRSRRIALLFMQRLHSTLRIRTLNPSL) are Cytoplasmic-facing. Residues 356-376 (GFDLMLFSSIVNCSYSYFALL) form a helical membrane-spanning segment. Topologically, residues 377–381 (KRVNS) are extracellular.

Belongs to the insect chemoreceptor superfamily. Heteromeric odorant receptor channel (TC 1.A.69) family. Or2a subfamily. Interacts with Orco. Complexes exist early in the endomembrane system in olfactory sensory neurons (OSNs), coupling these complexes to the conserved ciliary trafficking pathway. As to expression, isoform A is expressed in a subset of 17 olfactory receptor neurons in the maxillary palp.

The protein resides in the cell membrane. In terms of biological role, odorant receptor which mediates acceptance or avoidance behavior, depending on its substrates. The odorant receptor repertoire encodes a large collection of odor stimuli that vary widely in identity, intensity, and duration. May form a complex with Orco to form odorant-sensing units, providing sensitive and prolonged odorant signaling and calcium permeability. The protein is Odorant receptor 46a, isoform A (Or46a) of Drosophila melanogaster (Fruit fly).